We begin with the raw amino-acid sequence, 447 residues long: Argininosuccinate synthase (447 aa).

Residues alanine 17–serine 25 and alanine 43 each bind ATP. Tyrosine 99 lines the L-citrulline pocket. ATP is bound by residues glycine 129 and threonine 131. Residues threonine 131, asparagine 135, and aspartate 136 each coordinate L-aspartate. Asparagine 135 is an L-citrulline binding site. An ATP-binding site is contributed by aspartate 136. Arginine 139 and serine 192 together coordinate L-citrulline. Aspartate 194 lines the ATP pocket. Residues threonine 201, glutamate 203, and glutamate 280 each contribute to the L-citrulline site.

The protein belongs to the argininosuccinate synthase family. Type 2 subfamily. Homotetramer.

The protein resides in the cytoplasm. It carries out the reaction L-citrulline + L-aspartate + ATP = 2-(N(omega)-L-arginino)succinate + AMP + diphosphate + H(+). It participates in amino-acid biosynthesis; L-arginine biosynthesis; L-arginine from L-ornithine and carbamoyl phosphate: step 2/3. The protein is Argininosuccinate synthase of Escherichia coli O1:K1 / APEC.